The primary structure comprises 170 residues: Photosystem II extrinsic protein V (170 aa).

A signal peptide spans 1-33; it reads MASLFASLGRSLIKLLIVLPVIIGLSISSPAMA. The heme c site is built by cysteine 70, cysteine 73, histidine 74, and histidine 125.

It belongs to the cytochrome c family. PsbV subfamily. In terms of assembly, PSII is composed of 1 copy each of membrane proteins PsbA, PsbB, PsbC, PsbD, PsbE, PsbF, PsbH, PsbI, PsbJ, PsbK, PsbL, PsbM, PsbT, PsbX, PsbY, Psb30/Ycf12, peripheral proteins PsbO, CyanoQ (PsbQ), PsbU, PsbV and a large number of cofactors. It forms dimeric complexes. Heme c is required as a cofactor.

It is found in the cellular thylakoid membrane. Functionally, one of the extrinsic, lumenal subunits of photosystem II (PSII). PSII is a light-driven water plastoquinone oxidoreductase, using light energy to abstract electrons from H(2)O, generating a proton gradient subsequently used for ATP formation. The extrinsic proteins stabilize the structure of photosystem II oxygen-evolving complex (OEC), the ion environment of oxygen evolution and protect the OEC against heat-induced inactivation. Low-potential cytochrome c that plays a role in the OEC of PSII. This chain is Photosystem II extrinsic protein V, found in Prochlorococcus marinus (strain MIT 9303).